The sequence spans 379 residues: Cystathionine gamma-lyase (379 aa).

Lys-195 bears the N6-(pyridoxal phosphate)lysine mark.

It belongs to the trans-sulfuration enzymes family. Requires pyridoxal 5'-phosphate as cofactor.

It carries out the reaction L,L-cystathionine + H2O = 2-oxobutanoate + L-cysteine + NH4(+). The catalysed reaction is L-homocysteine + H2O = 2-oxobutanoate + hydrogen sulfide + NH4(+) + H(+). Catalyzes the conversion of cystathionine to cysteine, and homocysteine to sulfide. The protein is Cystathionine gamma-lyase (mccB) of Bacillus subtilis (strain 168).